Reading from the N-terminus, the 321-residue chain is Mechanosensory protein 3 (321 aa).

LIM zinc-binding domains are found at residues 27–86 and 87–152; these read NKCN…DHSI and HRCA…QMDD. The homeobox DNA-binding region spans 217 to 276; the sequence is RRGPRTTIKQNQLDVLNEMFSNTPKPSKHARAKLALETGLSMRVIQVWFQNRRSKERRLK.

In terms of assembly, interacts with unc-86; the heterooligomer binds to the promoters of mec-3, mec-4 and mec-7. As to expression, expressed in the mechanosensory neurons ALML, ALMR, PLML, PLMR, AVM and PVM, and the FLPL and FLPR neurons.

It localises to the nucleus. Transcription factor. Specifies differentiation of the set of six touch receptor neurons (TRNs). May positively modulate expression of both its own gene and also of homeobox ARX homolog alr-1 in TRNs, forming a positive feedback loop with alr-1, thereby restricting the variability of expression of mec-3. Required to determine the identity of ALM sensory neurons, acting by interacting with unc-86, thereby preventing unc-86 cooperating with pag-3 to induce BDU-neuron specific genes. Binds cooperatively as a heterodimer with unc-86 to sites in the mec-3 gene promoter. Promotes outgrowth of lateral dendritic branches on the PVD nociceptive neurons, probably acting both directly, and upstream of zinc finger protein egl-46. This Caenorhabditis elegans protein is Mechanosensory protein 3 (mec-3).